The sequence spans 353 residues: Sphingosine 1-phosphate receptor 2 (353 aa).

The Extracellular portion of the chain corresponds to 1–34; sequence MGSLYSEYLNPNKVQEHYNYTKETLETQETTSRQ. Asn19 carries N-linked (GlcNAc...) asparagine glycosylation. A helical membrane pass occupies residues 35–59; sequence VASAFIVILCCAIVVENLLVLIAVA. At 60 to 66 the chain is on the cytoplasmic side; it reads RNSKFHS. A helical transmembrane segment spans residues 67–95; the sequence is AMYLFLGNLAASDLLAGVAFVANTLLSGS. The Extracellular segment spans residues 96 to 109; it reads VTLRLTPVQWFARE. A helical transmembrane segment spans residues 110 to 128; sequence GSAFITLSASVFSLLAIAI. At 129–147 the chain is on the cytoplasmic side; sequence ERHVAIAKVKLYGSDKSCR. A helical membrane pass occupies residues 148–173; that stretch reads MLLLIGASWLISLVLGGLPILGWNCL. The Extracellular segment spans residues 174–189; sequence GHLEACSTVLPLYAKH. A helical membrane pass occupies residues 190 to 210; that stretch reads YVLCVVTIFSIILLAIVALYV. The Cytoplasmic portion of the chain corresponds to 211–233; that stretch reads RIYCVVRSSHADMAAPQTLALLK. A helical transmembrane segment spans residues 234 to 255; the sequence is TVTIVLGVFIVCWLPAFSILLL. Residues 256–271 are Extracellular-facing; it reads DYACPVHSCPILYKAH. A helical transmembrane segment spans residues 272 to 292; that stretch reads YFFAVSTLNSLLNPVIYTWRS. The Cytoplasmic portion of the chain corresponds to 293 to 353; that stretch reads RDLRREVLRP…PTFLEGNTVV (61 aa). Residue Cys305 is the site of S-palmitoyl cysteine attachment.

Belongs to the G-protein coupled receptor 1 family.

Its subcellular location is the cell membrane. Its function is as follows. Receptor for the lysosphingolipid sphingosine 1-phosphate (S1P). S1P is a bioactive lysophospholipid that elicits diverse physiological effects on most types of cells and tissues. When expressed in rat HTC4 hepatoma cells, is capable of mediating S1P-induced cell proliferation and suppression of apoptosis. Receptor for the chemokine-like protein FAM19A5. Mediates the inhibitory effect of FAM19A5 on vascular smooth muscle cell proliferation and migration. In lymphoid follicles, couples the binding of S1P to the activation of GNA13 and downstream inhibition of AKT activation leading to suppression of germinal center (GC) B cell growth and migration outside the GC niche. This is Sphingosine 1-phosphate receptor 2 (S1PR2) from Homo sapiens (Human).